The primary structure comprises 339 residues: Glyoxylate reductase (339 aa).

NADP(+)-binding positions include 157-160 (LGRI) and 239-241 (TAR). Residues arginine 241 and glutamate 270 contribute to the active site. Residue histidine 289 is the Proton donor of the active site. 289–291 (HIA) lines the NADP(+) pocket.

It belongs to the D-isomer specific 2-hydroxyacid dehydrogenase family. GyaR subfamily. In terms of assembly, homodimer.

The protein resides in the cytoplasm. The enzyme catalyses glycolate + NAD(+) = glyoxylate + NADH + H(+). The polypeptide is Glyoxylate reductase (Thermofilum pendens (strain DSM 2475 / Hrk 5)).